We begin with the raw amino-acid sequence, 311 residues long: Methionyl-tRNA formyltransferase (311 aa).

109 to 112 (SLLP) contacts (6S)-5,6,7,8-tetrahydrofolate.

The protein belongs to the Fmt family.

The enzyme catalyses L-methionyl-tRNA(fMet) + (6R)-10-formyltetrahydrofolate = N-formyl-L-methionyl-tRNA(fMet) + (6S)-5,6,7,8-tetrahydrofolate + H(+). Functionally, attaches a formyl group to the free amino group of methionyl-tRNA(fMet). The formyl group appears to play a dual role in the initiator identity of N-formylmethionyl-tRNA by promoting its recognition by IF2 and preventing the misappropriation of this tRNA by the elongation apparatus. The protein is Methionyl-tRNA formyltransferase of Staphylococcus aureus (strain MW2).